The chain runs to 347 residues: GMP reductase (347 aa).

108–131 (ADFEKTQQILSQNPQLNFVCIDVA) serves as a coordination point for NADP(+). Residues Gly-181 and Gly-183 each contribute to the K(+) site. Cys-186 acts as the Thioimidate intermediate in catalysis. 216-239 (IISDGGCTMPGDVAKAFGGGADFV) is a binding site for NADP(+).

Belongs to the IMPDH/GMPR family. GuaC type 1 subfamily. In terms of assembly, homotetramer.

It carries out the reaction IMP + NH4(+) + NADP(+) = GMP + NADPH + 2 H(+). In terms of biological role, catalyzes the irreversible NADPH-dependent deamination of GMP to IMP. It functions in the conversion of nucleobase, nucleoside and nucleotide derivatives of G to A nucleotides, and in maintaining the intracellular balance of A and G nucleotides. This Klebsiella pneumoniae subsp. pneumoniae (strain ATCC 700721 / MGH 78578) protein is GMP reductase.